The sequence spans 447 residues: Signal recognition particle 54 kDa protein (447 aa).

GTP-binding positions include 103 to 110, 185 to 189, and 245 to 248; these read GVQGSGKT, DTAGR, and TKMD.

The protein belongs to the GTP-binding SRP family. SRP54 subfamily. As to quaternary structure, part of the signal recognition particle protein translocation system, which is composed of SRP and FtsY. Archaeal SRP consists of a 7S RNA molecule of 300 nucleotides and two protein subunits: SRP54 and SRP19.

It localises to the cytoplasm. It carries out the reaction GTP + H2O = GDP + phosphate + H(+). Functionally, involved in targeting and insertion of nascent membrane proteins into the cytoplasmic membrane. Binds to the hydrophobic signal sequence of the ribosome-nascent chain (RNC) as it emerges from the ribosomes. The SRP-RNC complex is then targeted to the cytoplasmic membrane where it interacts with the SRP receptor FtsY. This chain is Signal recognition particle 54 kDa protein, found in Saccharolobus islandicus (strain M.16.27) (Sulfolobus islandicus).